The following is a 347-amino-acid chain: NADH-quinone oxidoreductase subunit H (347 aa).

The next 9 membrane-spanning stretches (helical) occupy residues 13–33, 50–70, 82–102, 115–135, 161–181, 198–218, 248–268, 286–306, and 321–341; these read LLILLKSVALIVILLVGVAYI, PNVVGPWGLFQAFADLFKFVF, GVFLLAPVVAAGLALAAWAVI, VGILYVFAIASLEVYGVIMAG, IGFVIVTVLLAVGSLNLTDIV, FLDWHWLALFPMFIIFFISAL, FLLFFLGEYVAIVLMCALTTI, VPGVVWFVLKLVAVFFMFALV, and LGWKVFLPISLFMVVATAAFL.

The protein belongs to the complex I subunit 1 family. NDH-1 is composed of 14 different subunits. Subunits NuoA, H, J, K, L, M, N constitute the membrane sector of the complex.

Its subcellular location is the cell inner membrane. It catalyses the reaction a quinone + NADH + 5 H(+)(in) = a quinol + NAD(+) + 4 H(+)(out). Its function is as follows. NDH-1 shuttles electrons from NADH, via FMN and iron-sulfur (Fe-S) centers, to quinones in the respiratory chain. The immediate electron acceptor for the enzyme in this species is believed to be ubiquinone. Couples the redox reaction to proton translocation (for every two electrons transferred, four hydrogen ions are translocated across the cytoplasmic membrane), and thus conserves the redox energy in a proton gradient. This subunit may bind ubiquinone. The chain is NADH-quinone oxidoreductase subunit H from Chelativorans sp. (strain BNC1).